A 290-amino-acid chain; its full sequence is MKSGFAAILGRPSTGKSTLLNSICGHKISIISPIPQTTRNNIKGIFTDDRGQIIFIDTPGFHLSKKKFNIAMMKNIHSSIGEVELILYIIDIQDKPGEEENKMLEIIKNSKIKFLVILNKIDLKNTKIKEITQFLKEKGIEDSNIIKISAEKKINTEELKNKIYENFSEGPLYYPQEYYTDQEINFRISEIIREKAIENLKEELPYSLYVDIDTLENKKGSLFIRANIFVANESQKGIIVGKNGKEIKSIGERARKTIAKIFETKCNLFLQVKLKKNWNKEDKLIKRLIN.

The Era-type G domain maps to 2-169 (KSGFAAILGR…KNKIYENFSE (168 aa)). Residues 10–17 (GRPSTGKS) are G1. Residue 10–17 (GRPSTGKS) participates in GTP binding. A G2 region spans residues 36–40 (QTTRN). The interval 57 to 60 (DTPG) is G3. GTP contacts are provided by residues 57–61 (DTPGF) and 119–122 (NKID). A G4 region spans residues 119-122 (NKID). Positions 148–150 (ISA) are G5. Positions 200–276 (LKEELPYSLY…NLFLQVKLKK (77 aa)) constitute a KH type-2 domain.

The protein belongs to the TRAFAC class TrmE-Era-EngA-EngB-Septin-like GTPase superfamily. Era GTPase family. In terms of assembly, monomer.

The protein resides in the cytoplasm. Its subcellular location is the cell inner membrane. In terms of biological role, an essential GTPase that binds both GDP and GTP, with rapid nucleotide exchange. Plays a role in 16S rRNA processing and 30S ribosomal subunit biogenesis and possibly also in cell cycle regulation and energy metabolism. The chain is GTPase Era from Borreliella burgdorferi (strain ATCC 35210 / DSM 4680 / CIP 102532 / B31) (Borrelia burgdorferi).